The chain runs to 419 residues: L-rhamnose isomerase (419 aa).

Mn(2+) is bound by residues histidine 262, aspartate 294, and aspartate 296.

Belongs to the rhamnose isomerase family. In terms of assembly, homotetramer. Requires Mn(2+) as cofactor.

Its subcellular location is the cytoplasm. It catalyses the reaction L-rhamnopyranose = L-rhamnulose. Its pathway is carbohydrate degradation; L-rhamnose degradation; glycerone phosphate from L-rhamnose: step 1/3. Functionally, catalyzes the interconversion of L-rhamnose and L-rhamnulose. The chain is L-rhamnose isomerase from Salmonella choleraesuis (strain SC-B67).